The primary structure comprises 397 residues: Lysophospholipid transporter LplT (397 aa).

Transmembrane regions (helical) follow at residues 16 to 36 (MMAV…LLFA), 53 to 73 (VLQM…GQVA), 91 to 111 (LGAV…LVGV), 139 to 159 (LMES…GMLA), 164 to 184 (GAAL…NLLI), 229 to 249 (WGAG…ALGI), 257 to 277 (YLNA…AKLV), 282 to 302 (VSRC…FSLQ), 304 to 324 (AALP…FFVV), 344 to 364 (IAVQ…LYSL), and 372 to 392 (VVGI…GLWL).

It belongs to the major facilitator superfamily. LplT (TC 2.A.1.42) family.

The protein localises to the cell inner membrane. Functionally, catalyzes the facilitated diffusion of 2-acyl-glycero-3-phosphoethanolamine (2-acyl-GPE) into the cell. The chain is Lysophospholipid transporter LplT from Cronobacter sakazakii (strain ATCC BAA-894) (Enterobacter sakazakii).